A 107-amino-acid chain; its full sequence is Nucleoid-associated protein Pnuc_0701 (107 aa).

The protein belongs to the YbaB/EbfC family. In terms of assembly, homodimer.

It localises to the cytoplasm. It is found in the nucleoid. Its function is as follows. Binds to DNA and alters its conformation. May be involved in regulation of gene expression, nucleoid organization and DNA protection. The polypeptide is Nucleoid-associated protein Pnuc_0701 (Polynucleobacter asymbioticus (strain DSM 18221 / CIP 109841 / QLW-P1DMWA-1) (Polynucleobacter necessarius subsp. asymbioticus)).